We begin with the raw amino-acid sequence, 298 residues long: tRNA dimethylallyltransferase 2 (298 aa).

10 to 17 (GPTASGKT) contacts ATP. Position 12-17 (12-17 (TASGKT)) interacts with substrate. The interaction with substrate tRNA stretch occupies residues 35–38 (DSRQ).

The protein belongs to the IPP transferase family. Monomer. Requires Mg(2+) as cofactor.

The enzyme catalyses adenosine(37) in tRNA + dimethylallyl diphosphate = N(6)-dimethylallyladenosine(37) in tRNA + diphosphate. Its function is as follows. Catalyzes the transfer of a dimethylallyl group onto the adenine at position 37 in tRNAs that read codons beginning with uridine, leading to the formation of N6-(dimethylallyl)adenosine (i(6)A). This Syntrophotalea carbinolica (strain DSM 2380 / NBRC 103641 / GraBd1) (Pelobacter carbinolicus) protein is tRNA dimethylallyltransferase 2.